Consider the following 121-residue polypeptide: Large ribosomal subunit protein bL12 (121 aa).

The protein belongs to the bacterial ribosomal protein bL12 family. In terms of assembly, homodimer. Part of the ribosomal stalk of the 50S ribosomal subunit. Forms a multimeric L10(L12)X complex, where L10 forms an elongated spine to which 2 to 4 L12 dimers bind in a sequential fashion. Binds GTP-bound translation factors.

Functionally, forms part of the ribosomal stalk which helps the ribosome interact with GTP-bound translation factors. Is thus essential for accurate translation. The polypeptide is Large ribosomal subunit protein bL12 (Salmonella agona (strain SL483)).